A 154-amino-acid polypeptide reads, in one-letter code: Protein AE7-like 1 (154 aa).

Belongs to the MIP18 family.

May play a role in chromosome segregation through establishment of sister chromatid cohesion. Unable to complement ae7 mutants, and thus probably not involved in the cytosolic iron-sulfur assembly (CIA) pathway. The chain is Protein AE7-like 1 from Arabidopsis thaliana (Mouse-ear cress).